The chain runs to 152 residues: Protein SprT-like (152 aa).

The 142-residue stretch at 7-148 folds into the SprT-like domain; sequence QRLVEEVSLQ…GKCKGKLILI (142 aa). Histidine 67 contacts Zn(2+). The active site involves glutamate 68. Residue histidine 71 coordinates Zn(2+).

This sequence belongs to the SprT family. Requires Zn(2+) as cofactor.

It localises to the cytoplasm. In Bacillus cereus (strain ATCC 10987 / NRS 248), this protein is Protein SprT-like.